A 153-amino-acid polypeptide reads, in one-letter code: Large ribosomal subunit protein uL13 (153 aa).

This sequence belongs to the universal ribosomal protein uL13 family. Part of the 50S ribosomal subunit.

Functionally, this protein is one of the early assembly proteins of the 50S ribosomal subunit, although it is not seen to bind rRNA by itself. It is important during the early stages of 50S assembly. The chain is Large ribosomal subunit protein uL13 from Methylobacterium nodulans (strain LMG 21967 / CNCM I-2342 / ORS 2060).